The following is a 198-amino-acid chain: Recombination protein RecR (198 aa).

The C4-type zinc-finger motif lies at 57-72; sequence CSVCGHITENDPCYIC. The 96-residue stretch at 80-175 folds into the Toprim domain; it reads SVICVVEDDK…KVTRLAQGLS (96 aa).

Belongs to the RecR family.

Functionally, may play a role in DNA repair. It seems to be involved in an RecBC-independent recombinational process of DNA repair. It may act with RecF and RecO. This is Recombination protein RecR from Staphylococcus haemolyticus (strain JCSC1435).